The chain runs to 193 residues: MVAELPVVESDRRLIWIDLEMTGLDTHRDSIIEIATVVTDAQLNVLAEGPEFAISHPLNVLEAMDEWNRNQHRHSGLWQRVLNSEIQHAQAEASTIAFLQQWVKIGASPMCGNSICQDRRFLHRQMPCLERYFHYRNLDVSTLKELAGCWSPSILDGVVKTSSHTALSDIYDSIAELRHYRKSMGTFAGLSVV.

Residues 14–177 (LIWIDLEMTG…SDIYDSIAEL (164 aa)) form the Exonuclease domain. Tyr-135 is a catalytic residue.

It belongs to the oligoribonuclease family.

It is found in the cytoplasm. Functionally, 3'-to-5' exoribonuclease specific for small oligoribonucleotides. The sequence is that of Oligoribonuclease from Xylella fastidiosa (strain Temecula1 / ATCC 700964).